The sequence spans 505 residues: L-arabinose isomerase (505 aa).

Mn(2+) contacts are provided by glutamate 308, glutamate 335, histidine 352, and histidine 453.

It belongs to the arabinose isomerase family. The cofactor is Mn(2+).

The catalysed reaction is beta-L-arabinopyranose = L-ribulose. It participates in carbohydrate degradation; L-arabinose degradation via L-ribulose; D-xylulose 5-phosphate from L-arabinose (bacterial route): step 1/3. Functionally, catalyzes the conversion of L-arabinose to L-ribulose. The sequence is that of L-arabinose isomerase from Bifidobacterium longum (strain DJO10A).